The primary structure comprises 345 residues: Small ribosomal subunit biogenesis GTPase RsgA (345 aa).

A disordered region spans residues 1–36; it reads MSKNKLSKGQERRVQANHQRRLQQRERGAAHWDDQP. Residues 23–34 show a composition bias toward basic and acidic residues; sequence QQRERGAAHWDD. A CP-type G domain is found at 103–273; it reads RSVLTRPDVY…LIDSPGVREL (171 aa). Residues 159–162 and 213–221 each bind GTP; these read NKID and GQSGVGKSS. Zn(2+)-binding residues include cysteine 297, cysteine 302, histidine 304, and cysteine 310.

It belongs to the TRAFAC class YlqF/YawG GTPase family. RsgA subfamily. In terms of assembly, monomer. Associates with 30S ribosomal subunit, binds 16S rRNA. It depends on Zn(2+) as a cofactor.

It localises to the cytoplasm. Functionally, one of several proteins that assist in the late maturation steps of the functional core of the 30S ribosomal subunit. Helps release RbfA from mature subunits. May play a role in the assembly of ribosomal proteins into the subunit. Circularly permuted GTPase that catalyzes slow GTP hydrolysis, GTPase activity is stimulated by the 30S ribosomal subunit. The polypeptide is Small ribosomal subunit biogenesis GTPase RsgA (Sodalis glossinidius (strain morsitans)).